A 953-amino-acid polypeptide reads, in one-letter code: Probable LRR receptor-like serine/threonine-protein kinase At1g53420 (953 aa).

The signal sequence occupies residues 1–22; the sequence is MSLNRFLFTSFSFFLFFIVHFA. Residues 23–566 are Extracellular-facing; sequence SSATLPTQEG…SPRNGMSTGT (544 aa). LRR repeat units follow at residues 63 to 86, 88 to 110, 111 to 132, 135 to 158, 159 to 182, and 183 to 205; these read WSTISRNLKRENLQGSLPKELVGL, LLQEIDLSRNYLNGSIPPEWGVL, PLVNIWLLGNRLTGPIPKEFGN, TLTSLVLEANQLSGELPLELGNLP, NIQQMILSSNNFNGEIPSTFAKLT, and TLRDFRVSDNQLSGTIPDFIQKW. N100 and N132 each carry an N-linked (GlcNAc...) asparagine glycan. Residues N265, N315, N335, N378, and N423 are each glycosylated (N-linked (GlcNAc...) asparagine). Residues 567–587 form a helical membrane-spanning segment; that stretch reads LHTLVVILSIFIVFLVFGTLW. The Cytoplasmic portion of the chain corresponds to 588–953; sequence KKGYLRSKSQ…SDRSESSADH (366 aa). Residues 624–901 form the Protein kinase domain; sequence FDSANRIGEG…VKMLEGKKMV (278 aa). Residues 630-638 and K652 contribute to the ATP site; that span reads IGEGGFGPV. Y697 is modified (phosphotyrosine). Residue D750 is the Proton acceptor of the active site. At S783 the chain carries Phosphoserine. Phosphothreonine occurs at positions 784 and 789. Residue Y797 is modified to Phosphotyrosine.

It belongs to the protein kinase superfamily. Ser/Thr protein kinase family.

Its subcellular location is the membrane. It carries out the reaction L-seryl-[protein] + ATP = O-phospho-L-seryl-[protein] + ADP + H(+). The catalysed reaction is L-threonyl-[protein] + ATP = O-phospho-L-threonyl-[protein] + ADP + H(+). This Arabidopsis thaliana (Mouse-ear cress) protein is Probable LRR receptor-like serine/threonine-protein kinase At1g53420.